The sequence spans 212 residues: NAD(P)H-hydrate epimerase (212 aa).

Residues 11-212 (MRHYDFYTIN…ANDMGTYAVD (202 aa)) form the YjeF N-terminal domain. 60–64 (NNGGD) contributes to the (6S)-NADPHX binding site. K(+)-binding residues include Asn61 and Asp123. Residues 127-133 (GIGIDRA), Tyr138, and Asp156 contribute to the (6S)-NADPHX site. Ser159 contacts K(+).

Belongs to the NnrE/AIBP family. Requires K(+) as cofactor.

The catalysed reaction is (6R)-NADHX = (6S)-NADHX. It catalyses the reaction (6R)-NADPHX = (6S)-NADPHX. In terms of biological role, catalyzes the epimerization of the S- and R-forms of NAD(P)HX, a damaged form of NAD(P)H that is a result of enzymatic or heat-dependent hydration. This is a prerequisite for the S-specific NAD(P)H-hydrate dehydratase to allow the repair of both epimers of NAD(P)HX. The sequence is that of NAD(P)H-hydrate epimerase from Limosilactobacillus reuteri (strain DSM 20016) (Lactobacillus reuteri).